A 212-amino-acid polypeptide reads, in one-letter code: Leucine efflux protein (212 aa).

The next 6 membrane-spanning stretches (helical) occupy residues 5–25 (FGVL…LVPG), 49–69 (GVFI…ATLI), 81–101 (YLGA…VLTQ), 122–142 (TLSL…VQFI), 153–173 (FFIL…FLIL), and 188–208 (LAKL…ARLA).

Belongs to the Rht family.

It localises to the cell inner membrane. The catalysed reaction is L-leucine(in) + H(+)(out) = L-leucine(out) + H(+)(in). Its function is as follows. Exporter of leucine. In Klebsiella pneumoniae subsp. pneumoniae (strain ATCC 700721 / MGH 78578), this protein is Leucine efflux protein (leuE).